A 1107-amino-acid chain; its full sequence is Polyphosphatidylinositol phosphatase INP53 (1107 aa).

The region spanning 142–482 is the SAC domain; sequence LKKLLSNGSF…GDQISQIYTG (341 aa). Position 497 is a phosphoserine (S497). The disordered stretch occupies residues 926-1107; sequence TASSVASSSP…LDSWQPLTPK (182 aa). Positions 927-942 are enriched in low complexity; that stretch reads ASSVASSSPVSSASAS. Over residues 943–956 the composition is skewed to polar residues; sequence LQPVRTQNSSQSRT. Residue S986 is modified to Phosphoserine. Composition is skewed to polar residues over residues 987–1005, 1020–1038, 1045–1063, and 1097–1107; these read PTPQ…NIQE, FSQN…SPMS, NSAS…QTPT, and TLDSWQPLTPK. Residue S1035 is modified to Phosphoserine. T1105 is modified (phosphothreonine).

Belongs to the synaptojanin family. It in the central section; belongs to the inositol 1,4,5-trisphosphate 5-phosphatase family. In terms of assembly, interacts (via SAC domain) with BSP1; the interaction is direct. Interacts with CHC1.

It is found in the cytoplasm. It carries out the reaction a 1,2-diacyl-sn-glycero-3-phospho-(1D-myo-inositol-4,5-bisphosphate) + H2O = a 1,2-diacyl-sn-glycero-3-phospho-(1D-myo-inositol 4-phosphate) + phosphate. Its function is as follows. Dephosphorylates a number of phosphatidylinositols (PIs) like phosphatidylinositol 4,5-bisphosphate (PtdIns(4,5)P2), but also phosphatidylinositol 3-phosphate (PtdIns(3)P), phosphatidylinositol 4-phosphate (PtdIns(4)P), and phosphatidylinositol 3,5-bisphosphate (PtdIns(3,5)P2). Controls the cellular levels and subcellular distribution of phosphatidylinositol 3-phosphate and phosphatidylinositol 4,5-bisphosphate. Plays an essential role in a TGN (trans Golgi network)-to-early endosome pathway. Involved in clathrin-mediated protein sorting at the TGN. The chain is Polyphosphatidylinositol phosphatase INP53 (INP53) from Saccharomyces cerevisiae (strain ATCC 204508 / S288c) (Baker's yeast).